A 977-amino-acid chain; its full sequence is DNA-directed RNA polymerase 3B, chloroplastic (977 aa).

Residues 1-71 (MASTASYSPS…NNIQSQTTVC (71 aa)) constitute a chloroplast transit peptide. Residues Asp678, Lys753, and Asp910 contribute to the active site.

It belongs to the phage and mitochondrial RNA polymerase family.

The protein resides in the plastid. Its subcellular location is the chloroplast. It catalyses the reaction RNA(n) + a ribonucleoside 5'-triphosphate = RNA(n+1) + diphosphate. Functionally, DNA-dependent RNA polymerase catalyzes the transcription of DNA into RNA using the four ribonucleoside triphosphates as substrates. This is DNA-directed RNA polymerase 3B, chloroplastic (RPOT3-TOM) from Nicotiana tabacum (Common tobacco).